Reading from the N-terminus, the 267-residue chain is Cilia- and flagella-associated protein 300 (267 aa).

The protein belongs to the CFAP300 family. Interacts with DNAAF2.

The protein resides in the cytoplasm. Its subcellular location is the cytoskeleton. It localises to the cilium axoneme. Its function is as follows. Cilium- and flagellum-specific protein that plays a role in axonemal structure organization and motility. May play a role in outer and inner dynein arm assembly. In Rattus norvegicus (Rat), this protein is Cilia- and flagella-associated protein 300.